The following is a 231-amino-acid chain: Sporulation protein RMD6 (231 aa).

The protein resides in the peroxisome. Functionally, required for sporulation. Required for meiotic nuclear division. The sequence is that of Sporulation protein RMD6 (RMD6) from Saccharomyces cerevisiae (strain ATCC 204508 / S288c) (Baker's yeast).